Here is a 62-residue protein sequence, read N- to C-terminus: MSIVFQIALAALVFFSFVMVIGVPFAYAAPQYWDQSKPLLWVGSGIWTILVIVVAVLNFFVI.

Helical transmembrane passes span 8–28 (ALAA…FAYA) and 41–61 (WVGS…NFFV).

The protein belongs to the PsbZ family. In terms of assembly, PSII is composed of 1 copy each of membrane proteins PsbA, PsbB, PsbC, PsbD, PsbE, PsbF, PsbH, PsbI, PsbJ, PsbK, PsbL, PsbM, PsbT, PsbX, PsbY, PsbZ, Psb30/Ycf12, peripheral proteins PsbO, CyanoQ (PsbQ), PsbU, PsbV and a large number of cofactors. It forms dimeric complexes.

The protein localises to the cellular thylakoid membrane. Functionally, may control the interaction of photosystem II (PSII) cores with the light-harvesting antenna, regulates electron flow through the 2 photosystem reaction centers. PSII is a light-driven water plastoquinone oxidoreductase, using light energy to abstract electrons from H(2)O, generating a proton gradient subsequently used for ATP formation. This is Photosystem II reaction center protein Z from Gloeothece citriformis (strain PCC 7424) (Cyanothece sp. (strain PCC 7424)).